An 84-amino-acid polypeptide reads, in one-letter code: Putative lipoprotein RzoQ (84 aa).

Residues M1–S22 form the signal peptide. A lipid anchor (N-palmitoyl cysteine) is attached at C23. C23 carries S-diacylglycerol cysteine lipidation.

It localises to the cell membrane. The sequence is that of Putative lipoprotein RzoQ (rzoQ) from Escherichia coli (strain K12).